Reading from the N-terminus, the 370-residue chain is Queuine tRNA-ribosyltransferase (370 aa).

Residue D93 is the Proton acceptor of the active site. Residues 93–97 (DSGGF), D147, Q190, and G217 contribute to the substrate site. The interval 248 to 254 (GVGTPDY) is RNA binding. The active-site Nucleophile is D267. The segment at 272–276 (TRVAR) is RNA binding; important for wobble base 34 recognition. C305, C307, C310, and H336 together coordinate Zn(2+).

It belongs to the queuine tRNA-ribosyltransferase family. In terms of assembly, homodimer. Within each dimer, one monomer is responsible for RNA recognition and catalysis, while the other monomer binds to the replacement base PreQ1. The cofactor is Zn(2+).

The catalysed reaction is 7-aminomethyl-7-carbaguanine + guanosine(34) in tRNA = 7-aminomethyl-7-carbaguanosine(34) in tRNA + guanine. Its pathway is tRNA modification; tRNA-queuosine biosynthesis. Functionally, catalyzes the base-exchange of a guanine (G) residue with the queuine precursor 7-aminomethyl-7-deazaguanine (PreQ1) at position 34 (anticodon wobble position) in tRNAs with GU(N) anticodons (tRNA-Asp, -Asn, -His and -Tyr). Catalysis occurs through a double-displacement mechanism. The nucleophile active site attacks the C1' of nucleotide 34 to detach the guanine base from the RNA, forming a covalent enzyme-RNA intermediate. The proton acceptor active site deprotonates the incoming PreQ1, allowing a nucleophilic attack on the C1' of the ribose to form the product. After dissociation, two additional enzymatic reactions on the tRNA convert PreQ1 to queuine (Q), resulting in the hypermodified nucleoside queuosine (7-(((4,5-cis-dihydroxy-2-cyclopenten-1-yl)amino)methyl)-7-deazaguanosine). The protein is Queuine tRNA-ribosyltransferase of Natranaerobius thermophilus (strain ATCC BAA-1301 / DSM 18059 / JW/NM-WN-LF).